We begin with the raw amino-acid sequence, 415 residues long: Branched-chain-amino-acid aminotransferase, cytosolic (415 aa).

Lys244 is subject to N6-(pyridoxal phosphate)lysine.

The protein belongs to the class-IV pyridoxal-phosphate-dependent aminotransferase family. Pyridoxal 5'-phosphate serves as cofactor.

Its subcellular location is the cytoplasm. The enzyme catalyses L-leucine + 2-oxoglutarate = 4-methyl-2-oxopentanoate + L-glutamate. It catalyses the reaction L-isoleucine + 2-oxoglutarate = (S)-3-methyl-2-oxopentanoate + L-glutamate. It carries out the reaction L-valine + 2-oxoglutarate = 3-methyl-2-oxobutanoate + L-glutamate. In terms of biological role, catalyzes the first reaction in the catabolism of the essential branched chain amino acids leucine, isoleucine, and valine. In Caenorhabditis elegans, this protein is Branched-chain-amino-acid aminotransferase, cytosolic (bcat-1).